The chain runs to 686 residues: Leucine-rich repeat-containing protein 49 (686 aa).

LRR repeat units lie at residues 113–134 (HLRLLNFQHNFITRIQNISNLQ), 135–156 (KLISLDLYDNQIEEISGLSTLR), 157–178 (CLRVLLLGKNRIKKISNLENLK), 179–200 (SLDVLDLHGNQITKIENINHLC), 201–222 (ELRVLNLARNFLSHVDNLNGLD), 223–244 (SLTELNLRHNQITFVRDVDNLP), and 245–266 (CLQHLFLSFNNISSFDSVSCLA). Positions 279-317 (NPIAQESWYKHTVLQNMMQLRQLDMKRITEEERRMASVL) constitute an LRRCT domain. Residues 303-341 (MKRITEEERRMASVLAKKEEEKKRESHKQSLLKEKKRLT) adopt a coiled-coil conformation. The disordered stretch occupies residues 360–388 (ATNEDRKDSDSPQDPCQIDGSTLSAFPEE).

Part of the neuronal tubulin polyglutamylase complex which contains TPGS1, TPGS2, TTLL1, LRRC49 and NICN1. Interacts with PCM1; TTLL1, TPGS1, TPGS2 and LRRC49.

Its subcellular location is the cytoplasm. The protein localises to the cytoskeleton. It localises to the microtubule organizing center. It is found in the centrosome. The protein resides in the centriolar satellite. Its function is as follows. Subunit of the tubulin polyglutamylase complex (TPGC). The complex mediates cilia and flagella polyglutamylation which is essential for their biogenesis and motility. The protein is Leucine-rich repeat-containing protein 49 of Homo sapiens (Human).